The chain runs to 211 residues: uncharacterized protein (211 aa).

Positions 54, 56, 58, 59, 129, 148, and 189 each coordinate Zn(2+).

The protein belongs to the metallo-beta-lactamase superfamily. Glyoxalase II family. Zn(2+) serves as cofactor.

This is an uncharacterized protein from Aquifex aeolicus (strain VF5).